Here is a 440-residue protein sequence, read N- to C-terminus: Gap junction alpha-8 protein (440 aa).

The stretch at 2–12 is an intramembrane region; it reads GDWSFLGNILE. Residues 13–21 lie on the Cytoplasmic side of the membrane; the sequence is EVNEHSTVI. Residues 22–42 form a helical membrane-spanning segment; sequence GRVWLTVLFIFRILILGTAAE. Residues 43 to 71 lie on the Extracellular side of the membrane; it reads FVWGDEQSDFVCNTQQPGCENVCYDEAFP. 3 disulfides stabilise this stretch: Cys-54–Cys-201, Cys-61–Cys-195, and Cys-65–Cys-190. The chain crosses the membrane as a helical span at residues 72 to 92; sequence ISHIRLWVLQIIFVSTPSLMY. Residues 93–161 are Cytoplasmic-facing; sequence VGHAVHHVRM…GTLLRTYVCH (69 aa). A disordered region spans residues 111–143; sequence AEELCQQSRSNGGERVPIAPDQASIRKSSSSSK. The helical transmembrane segment at 162 to 182 threads the bilayer; it reads IIFKTLFEVGFIVGHYFLYGF. The Extracellular portion of the chain corresponds to 183–210; that stretch reads RILPLYRCSRWPCPNVVDCFVSRPTEKT. The chain crosses the membrane as a helical span at residues 211–231; the sequence is IFILFMLSVAFVSLFLNIMEM. Residues 232–440 are Cytoplasmic-facing; it reads SHLGMKGIRS…SRARSDDLTI (209 aa). The tract at residues 338–440 is disordered; sequence VEREEPPIEE…SRARSDDLTI (103 aa). Composition is skewed to basic and acidic residues over residues 353-364 and 374-399; these read VGEKKQEAEKVA and PDRERVETPGVGKEDEKEELQAEKVT. Over residues 423 to 432 the composition is skewed to low complexity; it reads LSRLSKASSR.

This sequence belongs to the connexin family. Alpha-type (group II) subfamily. A hemichannel or connexon is composed of a hexamer of connexins. A functional gap junction is formed by the apposition of two hemichannels. Forms heteromeric channels with GJA3. In terms of tissue distribution, detected in eye lens (at protein level). Eye lens.

It localises to the cell membrane. The protein resides in the cell junction. It is found in the gap junction. Structural component of eye lens gap junctions. Gap junctions are dodecameric channels that connect the cytoplasm of adjoining cells. They are formed by the docking of two hexameric hemichannels, one from each cell membrane. Small molecules and ions diffuse from one cell to a neighboring cell via the central pore. This is Gap junction alpha-8 protein (Gja8) from Mus musculus (Mouse).